The sequence spans 545 residues: Probable quinate permease (545 aa).

The Cytoplasmic segment spans residues 1–22 (MSILSLVEDRPTPKEVYNWRIY). Residues 23–43 (LLAAVASFTSCMIGYDSAFIG) form a helical membrane-spanning segment. Residues 44-66 (TTISLQSFKDEFNWDAMSTDKQN) lie on the Extracellular side of the membrane. Residues 67 to 87 (LISANIVSLYQAGAFFGAFFA) traverse the membrane as a helical segment. The Cytoplasmic portion of the chain corresponds to 88–97 (YPMGHFWGRR). Residues 98–118 (WGLFVAALVFTLGAGLMLGAN) traverse the membrane as a helical segment. Over 119–130 (GDRGLGLIYGGR) the chain is Extracellular. The chain crosses the membrane as a helical span at residues 131–151 (VLAGLGVGAGSNITPIYISEL). Residues 152–159 (APPAIRGR) are Cytoplasmic-facing. A helical membrane pass occupies residues 160-180 (LVGVYELGWQIGGLVGFWICF). Residues 181-193 (GVDDTLAPSHKQW) lie on the Extracellular side of the membrane. The helical transmembrane segment at 194 to 214 (IIPFAVQLIPSGLLLLGILFV) threads the bilayer. Residues 215–285 (RESPRWLFLR…VWSNKRIMYR (71 aa)) are Cytoplasmic-facing. A helical membrane pass occupies residues 286–306 (LFLGSMLFLWQNGSGINAINY). Residues 307 to 325 (YSPTVFKSIGLRGANTSLL) lie on the Extracellular side of the membrane. Residues 326–346 (TTGIFGVVKTVVTFVWLLWLI) form a helical membrane-spanning segment. Over 347–352 (DRLGRR) the chain is Cytoplasmic. The chain crosses the membrane as a helical span at residues 353–373 (LLLMIGAAGGSVCLWIVGAYI). The Extracellular segment spans residues 374–384 (KVAKPTERDPD). A helical transmembrane segment spans residues 385-405 (APLDGGGIAAMFFFYLWTVFY). The Cytoplasmic portion of the chain corresponds to 406-457 (TPSWNGTPWVMNSEMFDPNVRSLAQACAAGSNWLWNFLISRFTPQMFAKMEY). The helical transmembrane segment at 458-478 (GVYFFFASLMILSIVFVFFLI) threads the bilayer. The Extracellular segment spans residues 479–545 (PETKGIPLES…VEQAESVPKA (67 aa)). Residues 520–545 (IEESGYTKSDAQQVERVEQAESVPKA) form a disordered region.

Belongs to the major facilitator superfamily. Sugar transporter (TC 2.A.1.1) family. Interacts with creB. In terms of processing, ubiquitinated. Deubiquitinated by creB, probably to control its activity or amount.

The protein localises to the cell membrane. In terms of biological role, integral membrane transporter that imports quinic acid to be catabolized as a carbon source. The protein is Probable quinate permease (qutD) of Aspergillus terreus (strain NIH 2624 / FGSC A1156).